Here is a 124-residue protein sequence, read N- to C-terminus: Large ribosomal subunit protein uL29 (124 aa).

Belongs to the universal ribosomal protein uL29 family.

The chain is Large ribosomal subunit protein uL29 (RPL35) from Triticum aestivum (Wheat).